Here is a 138-residue protein sequence, read N- to C-terminus: Large ribosomal subunit protein uL16 (138 aa).

Belongs to the universal ribosomal protein uL16 family. Part of the 50S ribosomal subunit.

Functionally, binds 23S rRNA and is also seen to make contacts with the A and possibly P site tRNAs. This is Large ribosomal subunit protein uL16 from Gluconobacter oxydans (strain 621H) (Gluconobacter suboxydans).